The following is a 127-amino-acid chain: Aspartate 1-decarboxylase (127 aa).

Serine 25 serves as the catalytic Schiff-base intermediate with substrate; via pyruvic acid. At serine 25 the chain carries Pyruvic acid (Ser). Threonine 57 is a substrate binding site. The active-site Proton donor is tyrosine 58. Residue 73 to 75 (GAA) participates in substrate binding.

It belongs to the PanD family. Heterooctamer of four alpha and four beta subunits. The cofactor is pyruvate. In terms of processing, is synthesized initially as an inactive proenzyme, which is activated by self-cleavage at a specific serine bond to produce a beta-subunit with a hydroxyl group at its C-terminus and an alpha-subunit with a pyruvoyl group at its N-terminus.

It is found in the cytoplasm. It carries out the reaction L-aspartate + H(+) = beta-alanine + CO2. The protein operates within cofactor biosynthesis; (R)-pantothenate biosynthesis; beta-alanine from L-aspartate: step 1/1. Functionally, catalyzes the pyruvoyl-dependent decarboxylation of aspartate to produce beta-alanine. The polypeptide is Aspartate 1-decarboxylase (Bacillus cereus (strain ATCC 10987 / NRS 248)).